We begin with the raw amino-acid sequence, 83 residues long: Short neurotoxin OKI-01/OKI-19 (83 aa).

Positions 1–21 (MKTLLLTLVVVTIVCLDLGYT) are cleaved as a signal peptide. 4 disulfides stabilise this stretch: cysteine 24/cysteine 45, cysteine 38/cysteine 62, cysteine 64/cysteine 75, and cysteine 76/cysteine 81.

The protein belongs to the three-finger toxin family. Short-chain subfamily. Type I alpha-neurotoxin sub-subfamily. Expressed by the venom gland.

The protein resides in the secreted. Its function is as follows. Binds to muscle nicotinic acetylcholine receptor (nAChR) and inhibit acetylcholine from binding to the receptor, thereby impairing neuromuscular transmission. This chain is Short neurotoxin OKI-01/OKI-19, found in Laticauda laticaudata (Blue-ringed sea krait).